The primary structure comprises 185 residues: Elongation factor P (185 aa).

The protein belongs to the elongation factor P family.

It is found in the cytoplasm. It functions in the pathway protein biosynthesis; polypeptide chain elongation. In terms of biological role, involved in peptide bond synthesis. Stimulates efficient translation and peptide-bond synthesis on native or reconstituted 70S ribosomes in vitro. Probably functions indirectly by altering the affinity of the ribosome for aminoacyl-tRNA, thus increasing their reactivity as acceptors for peptidyl transferase. This is Elongation factor P from Bacillus cereus (strain 03BB102).